The following is a 383-amino-acid chain: Phosphoenolpyruvate/phosphate translocator 2, chloroplastic (383 aa).

A chloroplast-targeting transit peptide spans 1–55; sequence MFALTFLNPNPRLPSPLFLAKSTPESALSRRSRAFSSSNSYPWRPNLRFNGFKLK. The next 8 helical transmembrane spans lie at 76-96, 108-128, 143-163, 179-199, 210-232, 253-273, 299-319, and 350-369; these read GLKL…YNIF, ATVT…MWLL, VIVQ…VSLG, FFTV…WIVC, LASF…SNVT, INLF…LAIL, IMSL…YMIL, and VSPL…YLYS. The EamA domain maps to 93-212; that stretch reads YNIFNKQVLR…PIVAGVSLAS (120 aa).

This sequence belongs to the TPT transporter family. PPT (TC 2.A.7.9) subfamily. Widely expressed in leaves throughout development. In flowers, expressed in sepals and pistils.

The protein resides in the plastid. It is found in the chloroplast membrane. Phosphoenolpyruvate/phosphate translocator that transports phosphoenolpyruvate (PEP), 2-phosphoglycerate and 3-phosphoglycerate. The protein is Phosphoenolpyruvate/phosphate translocator 2, chloroplastic (PPT2) of Arabidopsis thaliana (Mouse-ear cress).